A 1024-amino-acid polypeptide reads, in one-letter code: Carbamoyl phosphate synthase large chain (1024 aa).

Residues 1–402 (MPKRTDLQTI…SLQKALRSTE (402 aa)) are carboxyphosphate synthetic domain. ATP contacts are provided by Arg-129, Arg-169, Gly-175, Gly-176, Glu-208, Ile-210, Glu-215, Gly-241, Val-242, His-243, Gln-285, and Glu-299. The 196-residue stretch at 133-328 (QAAMKKIGVE…IAKIAALLAV (196 aa)) folds into the ATP-grasp 1 domain. Residues Gln-285, Glu-299, and Asn-301 each coordinate Mg(2+). Gln-285, Glu-299, and Asn-301 together coordinate Mn(2+). Positions 403-546 (GDIRGVYAEM…YSTYEWEDEV (144 aa)) are oligomerization domain. The tract at residues 547–929 (APTDKPKVVI…AFYRAQLGAK (383 aa)) is carbamoyl phosphate synthetic domain. The ATP-grasp 2 domain occupies 671 to 863 (NALCERLGLP…LAKSAARIAA (193 aa)). 10 residues coordinate ATP: Arg-707, Gln-747, Leu-749, Glu-754, Gly-779, Val-780, His-781, Ser-782, Gln-822, and Glu-834. Positions 822, 834, and 836 each coordinate Mg(2+). Residues Gln-822, Glu-834, and Asn-836 each contribute to the Mn(2+) site. Residues 930–1024 (NYLPLEGTAL…GVRSLQEWVK (95 aa)) enclose the MGS-like domain. The allosteric domain stretch occupies residues 930 to 1024 (NYLPLEGTAL…GVRSLQEWVK (95 aa)).

This sequence belongs to the CarB family. As to quaternary structure, composed of two chains; the small (or glutamine) chain promotes the hydrolysis of glutamine to ammonia, which is used by the large (or ammonia) chain to synthesize carbamoyl phosphate. Tetramer of heterodimers (alpha,beta)4. Mg(2+) serves as cofactor. Requires Mn(2+) as cofactor.

The catalysed reaction is hydrogencarbonate + L-glutamine + 2 ATP + H2O = carbamoyl phosphate + L-glutamate + 2 ADP + phosphate + 2 H(+). It catalyses the reaction hydrogencarbonate + NH4(+) + 2 ATP = carbamoyl phosphate + 2 ADP + phosphate + 2 H(+). Its pathway is amino-acid biosynthesis; L-arginine biosynthesis; carbamoyl phosphate from bicarbonate: step 1/1. It participates in pyrimidine metabolism; UMP biosynthesis via de novo pathway; (S)-dihydroorotate from bicarbonate: step 1/3. Functionally, large subunit of the glutamine-dependent carbamoyl phosphate synthetase (CPSase). CPSase catalyzes the formation of carbamoyl phosphate from the ammonia moiety of glutamine, carbonate, and phosphate donated by ATP, constituting the first step of 2 biosynthetic pathways, one leading to arginine and/or urea and the other to pyrimidine nucleotides. The large subunit (synthetase) binds the substrates ammonia (free or transferred from glutamine from the small subunit), hydrogencarbonate and ATP and carries out an ATP-coupled ligase reaction, activating hydrogencarbonate by forming carboxy phosphate which reacts with ammonia to form carbamoyl phosphate. In Deinococcus radiodurans (strain ATCC 13939 / DSM 20539 / JCM 16871 / CCUG 27074 / LMG 4051 / NBRC 15346 / NCIMB 9279 / VKM B-1422 / R1), this protein is Carbamoyl phosphate synthase large chain.